Reading from the N-terminus, the 307-residue chain is 4-hydroxythreonine-4-phosphate dehydrogenase (307 aa).

H126 and T127 together coordinate substrate. H156, H195, and H251 together coordinate a divalent metal cation. K259, N268, and R277 together coordinate substrate.

It belongs to the PdxA family. As to quaternary structure, homodimer. Zn(2+) serves as cofactor. Requires Mg(2+) as cofactor. Co(2+) is required as a cofactor.

The protein resides in the cytoplasm. The catalysed reaction is 4-(phosphooxy)-L-threonine + NAD(+) = 3-amino-2-oxopropyl phosphate + CO2 + NADH. Its pathway is cofactor biosynthesis; pyridoxine 5'-phosphate biosynthesis; pyridoxine 5'-phosphate from D-erythrose 4-phosphate: step 4/5. Its function is as follows. Catalyzes the NAD(P)-dependent oxidation of 4-(phosphooxy)-L-threonine (HTP) into 2-amino-3-oxo-4-(phosphooxy)butyric acid which spontaneously decarboxylates to form 3-amino-2-oxopropyl phosphate (AHAP). This is 4-hydroxythreonine-4-phosphate dehydrogenase from Helicobacter pylori (strain HPAG1).